We begin with the raw amino-acid sequence, 156 residues long: ATP synthase subunit b (156 aa).

The helical transmembrane segment at 11–31 (LIAFALFVWFCMKFVWPPIIN) threads the bilayer.

It belongs to the ATPase B chain family. F-type ATPases have 2 components, F(1) - the catalytic core - and F(0) - the membrane proton channel. F(1) has five subunits: alpha(3), beta(3), gamma(1), delta(1), epsilon(1). F(0) has three main subunits: a(1), b(2) and c(10-14). The alpha and beta chains form an alternating ring which encloses part of the gamma chain. F(1) is attached to F(0) by a central stalk formed by the gamma and epsilon chains, while a peripheral stalk is formed by the delta and b chains.

Its subcellular location is the cell inner membrane. Its function is as follows. F(1)F(0) ATP synthase produces ATP from ADP in the presence of a proton or sodium gradient. F-type ATPases consist of two structural domains, F(1) containing the extramembraneous catalytic core and F(0) containing the membrane proton channel, linked together by a central stalk and a peripheral stalk. During catalysis, ATP synthesis in the catalytic domain of F(1) is coupled via a rotary mechanism of the central stalk subunits to proton translocation. Functionally, component of the F(0) channel, it forms part of the peripheral stalk, linking F(1) to F(0). The sequence is that of ATP synthase subunit b from Haemophilus influenzae (strain PittEE).